We begin with the raw amino-acid sequence, 295 residues long: Virginiamycin B lyase (295 aa).

His-228 is a binding site for substrate. Glu-268 serves as a coordination point for Mg(2+). His-270 serves as the catalytic Proton acceptor. Residue Glu-285 coordinates Mg(2+).

This sequence belongs to the Vgb family. In terms of assembly, monomer. It depends on Mg(2+) as a cofactor.

In terms of biological role, inactivates the type B streptogramin antibiotics by linearizing the lactone ring at the ester linkage, generating a free phenylglycine carboxylate and converting the threonyl moiety into 2-amino-butenoic acid. The protein is Virginiamycin B lyase of Clostridium beijerinckii (strain ATCC 51743 / NCIMB 8052) (Clostridium acetobutylicum).